A 129-amino-acid polypeptide reads, in one-letter code: Natriuretic peptides B (129 aa).

Positions 1 to 26 are cleaved as a signal peptide; the sequence is MDPQKALSRTLLLLLFLHLSLLGCRS. Cysteines 107 and 123 form a disulfide.

It belongs to the natriuretic peptide family. Post-translationally, the precursor molecule is proteolytically cleaved, possibly by FURIN or CORIN, to produce the active peptide. May undergo further proteolytic cleavage by various proteases such as DPP4, MME and possibly FAP, to give rise to a variety of shorter peptides. May be cleaved at Pro-99 by the prolyl endopeptidase FAP (seprase) activity (in vitro). May be degraded by IDE. During IDE degradation, the resulting products initially increase the activation of NPR1 and can also stimulate NPR2 to produce cGMP before the fragments are completely degraded and inactivated by IDE (in vitro).

It localises to the secreted. Cardiac hormone that plays a key role in mediating cardio-renal homeostasis. May also function as a paracrine antifibrotic factor in the heart. Acts by specifically binding and stimulating NPR1 to produce cGMP, which in turn activates effector proteins that drive various biological responses. Involved in regulating the extracellular fluid volume and maintaining the fluid-electrolyte balance through natriuresis, diuresis, vasorelaxation, and inhibition of renin and aldosterone secretion. Binds the clearance receptor NPR3. The protein is Natriuretic peptides B (NPPB) of Ovis aries (Sheep).